The primary structure comprises 544 residues: E3 ubiquitin-protein ligase makorin-3 (544 aa).

2 disordered regions span residues 1–46 (MEES…VSSA) and 117–144 (DLSGRRRSRGGQDAQPRASADRGPKMAT). Composition is skewed to low complexity over residues 9 to 19 (EAHAAAGAEAG) and 36 to 46 (AAGASAGVSSA). 2 C3H1-type zinc fingers span residues 92–119 (WTKQILCRYYLHGQCKEGDNCRYSHDLS) and 274–301 (PMPLPLCRYAARGQCLRGDRCAYPHGEI). Residues 302–329 (CDMCGQQALHPWDAAQQEAHRRACVEAH) form a makorin-type Cys-His region. The RING-type zinc-finger motif lies at 347–401 (CGICMEVVYEKADPSDRRFGILFSCNHTYCLRCIRRWRSATQFENRISKSCPQCR). The C3H1-type 3 zinc finger occupies 430-459 (GMSQKACRYFAGGLGHCPFGEFCFYKHEYP).

In terms of tissue distribution, mainly expressed in mouse brain and reproductive system including testis and ovary. Ubiquitously detected at low levels throughout the entire embryo, but expression is highest in the ventricular layers of the brain.

It localises to the nucleus. It catalyses the reaction S-ubiquitinyl-[E2 ubiquitin-conjugating enzyme]-L-cysteine + [acceptor protein]-L-lysine = [E2 ubiquitin-conjugating enzyme]-L-cysteine + N(6)-ubiquitinyl-[acceptor protein]-L-lysine.. It participates in protein modification; protein ubiquitination. Functionally, E3 ubiquitin ligase catalyzing the covalent attachment of ubiquitin moieties onto substrate proteins. Acts as a key developmental timer that helps ensure puberty begins at the appropriate age, by inhibiting premature activation of the reproductive hormone cascade. Epigenetically regulates GNRH1 transcription by disrupting the binding of methyl-DNA binding protein 3/MBD3 to the promoter of GNRH1. Mechanistically, mediates the non-proteolytic ubiquitination of MBD3 at multiple sites with 'Lys27' ubiquitin linkages and thereby regulates the methylation status of the genome, including GNRH1 promoter. Modulates the stability and translation of GNRH1 mRNA by mediating the non-proteolytic ubiquitination of PABP family members PABPC1, PABPC3 and PABPC4 at multiple sites. Also participates in the maintenance of genomic and epigenomic stability by regulating the abundance of APEX2 via 'Lys-48'-linked ubiquitination. The protein is E3 ubiquitin-protein ligase makorin-3 (Mkrn3) of Mus musculus (Mouse).